Reading from the N-terminus, the 95-residue chain is Acylphosphatase (95 aa).

The Acylphosphatase-like domain maps to 7–94 (AALVRITGRV…EAPAGFRITR (88 aa)). Catalysis depends on residues arginine 22 and asparagine 40. Low complexity predominate over residues 76-88 (VASEEASSAEAPA). The tract at residues 76–95 (VASEEASSAEAPAGFRITRG) is disordered.

It belongs to the acylphosphatase family.

It carries out the reaction an acyl phosphate + H2O = a carboxylate + phosphate + H(+). This chain is Acylphosphatase (acyP), found in Rhizobium meliloti (strain 1021) (Ensifer meliloti).